Here is a 357-residue protein sequence, read N- to C-terminus: Peptide chain release factor 1 (357 aa).

At glutamine 236 the chain carries N5-methylglutamine. The span at 284-293 (RRKKDQERAN) shows a compositional bias: basic and acidic residues. The interval 284–313 (RRKKDQERANNRRKQIGSGDRSERIRTYNF) is disordered.

The protein belongs to the prokaryotic/mitochondrial release factor family. Post-translationally, methylated by PrmC. Methylation increases the termination efficiency of RF1.

It is found in the cytoplasm. In terms of biological role, peptide chain release factor 1 directs the termination of translation in response to the peptide chain termination codons UAG and UAA. The chain is Peptide chain release factor 1 from Rickettsia bellii (strain RML369-C).